Reading from the N-terminus, the 655-residue chain is Sphingomyelin phosphodiesterase 3 (655 aa).

Residues 1-10 (MVLYTTPFPN) lie on the Cytoplasmic side of the membrane. Residues 11–31 (SCLSALHCVSWALIFPCYWLV) constitute an intramembrane region (helical). Topologically, residues 32–64 (DRLAASFIPTTYEKRQRADDPCCLQLLCTALFT) are cytoplasmic. 3 S-palmitoyl cysteine lipidation sites follow: C53, C54, and C59. An intramembrane region (helical) is located at residues 65 to 85 (PIYLALLVASLPFAFLGFLFW). Over 86–655 (SPLQSARRPY…LMVSSGEEEA (570 aa)) the chain is Cytoplasmic. S178 is modified (phosphoserine). Positions 210–319 (VEYKGDGGRH…DTSASGEPGA (110 aa)) are disordered. Basic and acidic residues-rich tracts occupy residues 212 to 222 (YKGDGGRHPGD) and 248 to 257 (GGEEGGRPPE). A compositionally biased stretch (polar residues) spans 279–299 (TPNHNQQDGDSGSLGSPSASR). A Phosphoserine modification is found at S291. E364 is a binding site for Mg(2+). S-palmitoyl cysteine attachment occurs at residues C397 and C398. H639 (proton acceptor) is an active-site residue.

This sequence belongs to the neutral sphingomyelinase family. Mg(2+) is required as a cofactor. Post-translationally, palmitoylated, palmitoylation-deficient proteins are targeted for lysosomal degradation. In terms of tissue distribution, predominantly expressed in brain.

It is found in the golgi apparatus membrane. The protein localises to the cell membrane. It carries out the reaction a sphingomyelin + H2O = phosphocholine + an N-acylsphing-4-enine + H(+). The catalysed reaction is N-(15Z-tetracosenoyl)sphing-4-enine-1-phosphocholine + H2O = N-(15Z-tetracosenoyl)-sphing-4-enine + phosphocholine + H(+). The enzyme catalyses N-(tetracosanoyl)-sphing-4-enine-1-phosphocholine + H2O = N-tetracosanoyl-sphing-4-enine + phosphocholine + H(+). It catalyses the reaction an N-(acyl)-sphingosylphosphocholine + H2O = an N-acyl-sphingoid base + phosphocholine + H(+). It carries out the reaction 1-hexadecanoyl-sn-glycero-3-phosphocholine + H2O = 1-hexadecanoyl-sn-glycerol + phosphocholine + H(+). The catalysed reaction is 1-O-octadecyl-sn-glycero-3-phosphocholine + H2O = 1-O-octadecyl-sn-glycerol + phosphocholine + H(+). The enzyme catalyses a sphingosylphosphocholine + H2O = a sphingoid base + phosphocholine + H(+). It catalyses the reaction N-(hexadecanoyl)-sphing-4-enine-1-phosphocholine + H2O = N-hexadecanoylsphing-4-enine + phosphocholine + H(+). It functions in the pathway lipid metabolism; sphingolipid metabolism. Its activity is regulated as follows. Inhibited by nSMase inhibitor GW4869. Binding of anionic phospholipids (APLs) such as phosphatidylserine (PS) and phosphatidic acid (PA) increases enzymatic activity. Its function is as follows. Catalyzes the hydrolysis of sphingomyelin to form ceramide and phosphocholine. Ceramide mediates numerous cellular functions, such as apoptosis and growth arrest, and is capable of regulating these 2 cellular events independently. Also hydrolyzes sphingosylphosphocholine. Regulates the cell cycle by acting as a growth suppressor in confluent cells. Probably acts as a regulator of postnatal development and participates in bone and dentin mineralization. Binds to anionic phospholipids (APLs) such as phosphatidylserine (PS) and phosphatidic acid (PA) that modulate enzymatic activity and subcellular location. May be involved in IL-1-beta-induced JNK activation in hepatocytes. May act as a mediator in transcriptional regulation of NOS2/iNOS via the NF-kappa-B activation under inflammatory conditions. The sequence is that of Sphingomyelin phosphodiesterase 3 from Homo sapiens (Human).